Reading from the N-terminus, the 970-residue chain is Sodium/calcium exchanger 1 (970 aa).

An N-terminal signal peptide occupies residues 1 to 32 (MLRLSLPPNVSMGFRLVALVALLFSHVDHITA). Residues 33–71 (DTEAETGGNETTECTGSYYCKKGVILPIWEPQDPSFGDK) are Extracellular-facing. Asn-41 carries an N-linked (GlcNAc...) asparagine glycan. The helical transmembrane segment at 72–92 (IARATVYFVAMVYMFLGVSII) threads the bilayer. Topologically, residues 93 to 133 (ADRFMSSIEVITSQEKEITIKKPNGETTKTTVRIWNETVSN) are cytoplasmic. Residues 134–154 (LTLMALGSSAPEILLSVIEVC) traverse the membrane as a helical segment. Residues 138–178 (ALGSSAPEILLSVIEVCGHNFTAGDLGPSTIVGSAAFNMFI) form an Alpha-1 repeat. The Extracellular segment spans residues 155–167 (GHNFTAGDLGPST). Asn-157 is a glycosylation site (N-linked (GlcNAc...) asparagine). Residues 168-188 (IVGSAAFNMFIIIALCVYVVP) form a helical membrane-spanning segment. The Cytoplasmic segment spans residues 189-201 (DGETRKIKHLRVF). Residues 202-222 (FVTAAWSIFAYTWLYIILSVS) traverse the membrane as a helical segment. Over 223 to 228 (SPGVVE) the chain is Extracellular. Residues 229 to 249 (VWEGLLTFFFFPICVVFAWVA) traverse the membrane as a helical segment. Topologically, residues 250–797 (DRRLLFYKYV…FVPPTEYWNG (548 aa)) are cytoplasmic. Residues 251-270 (RRLLFYKYVYKRYRAGKQRG) are putative calmodulin-binding region. Phosphoserine occurs at positions 282 and 389. Calx-beta domains are found at residues 393-493 (VNME…VHLS) and 524-624 (ATIT…IEIG). Residues Glu-417, Asp-453, Asp-478, Asp-479, Ile-481, Glu-483, Glu-486, Asp-530, Asp-531, Asp-532, Glu-548, Asp-584, Asp-610, Glu-611, Glu-612, and Glu-715 each contribute to the Ca(2+) site. The chain crosses the membrane as a helical span at residues 798 to 818 (WACFIVSILMIGLLTAFIGDL). Topologically, residues 819–821 (ASH) are extracellular. A helical membrane pass occupies residues 822 to 842 (FGCTIGLKDSVTAVVFVALGT). An Alpha-2 repeat occupies 839 to 875 (ALGTSVPDTFASKVAATQDQYADASIGNVTGSNAVNV). The Cytoplasmic portion of the chain corresponds to 843–871 (SVPDTFASKVAATQDQYADASIGNVTGSN). Residues 872–892 (AVNVFLGIGVAWSIAAIYHAA) traverse the membrane as a helical segment. The Extracellular portion of the chain corresponds to 893–903 (NGEQFKVSPGT). A helical membrane pass occupies residues 904–924 (LAFSVTLFTIFAFINVGVLLY). Over 925 to 941 (RRRPEIGGELGGPRTAK) the chain is Cytoplasmic. A helical transmembrane segment spans residues 942–962 (LLTSSLFVLLWLLYIFFSSLE). Topologically, residues 963–970 (AYCHIKGF) are extracellular.

It belongs to the Ca(2+):cation antiporter (CaCA) (TC 2.A.19) family. SLC8 subfamily. Detected in heart, kidney and brain (at protein level).

It localises to the cell membrane. It carries out the reaction Ca(2+)(in) + 3 Na(+)(out) = Ca(2+)(out) + 3 Na(+)(in). Its activity is regulated as follows. Activated by micromolar levels of Ca(2+). Functionally, mediates the exchange of one Ca(2+) ion against three to four Na(+) ions across the cell membrane, and thereby contributes to the regulation of cytoplasmic Ca(2+) levels and Ca(2+)-dependent cellular processes. Contributes to Ca(2+) transport during excitation-contraction coupling in muscle. In a first phase, voltage-gated channels mediate the rapid increase of cytoplasmic Ca(2+) levels due to release of Ca(2+) stores from the endoplasmic reticulum. SLC8A1 mediates the export of Ca(2+) from the cell during the next phase, so that cytoplasmic Ca(2+) levels rapidly return to baseline. Required for normal embryonic heart development and the onset of heart contractions. The polypeptide is Sodium/calcium exchanger 1 (Slc8a1) (Mus musculus (Mouse)).